Here is a 241-residue protein sequence, read N- to C-terminus: Phosphoribosylaminoimidazole-succinocarboxamide synthase (241 aa).

The protein belongs to the SAICAR synthetase family.

It carries out the reaction 5-amino-1-(5-phospho-D-ribosyl)imidazole-4-carboxylate + L-aspartate + ATP = (2S)-2-[5-amino-1-(5-phospho-beta-D-ribosyl)imidazole-4-carboxamido]succinate + ADP + phosphate + 2 H(+). The protein operates within purine metabolism; IMP biosynthesis via de novo pathway; 5-amino-1-(5-phospho-D-ribosyl)imidazole-4-carboxamide from 5-amino-1-(5-phospho-D-ribosyl)imidazole-4-carboxylate: step 1/2. The protein is Phosphoribosylaminoimidazole-succinocarboxamide synthase of Oenococcus oeni (strain ATCC BAA-331 / PSU-1).